Consider the following 122-residue polypeptide: Small ribosomal subunit protein uS13 (122 aa).

The disordered stretch occupies residues 99–122 (RGQRTHTNARTRKGPAKAIAGKKK).

The protein belongs to the universal ribosomal protein uS13 family. As to quaternary structure, part of the 30S ribosomal subunit. Forms a loose heterodimer with protein S19. Forms two bridges to the 50S subunit in the 70S ribosome.

Its function is as follows. Located at the top of the head of the 30S subunit, it contacts several helices of the 16S rRNA. In the 70S ribosome it contacts the 23S rRNA (bridge B1a) and protein L5 of the 50S subunit (bridge B1b), connecting the 2 subunits; these bridges are implicated in subunit movement. Contacts the tRNAs in the A and P-sites. The polypeptide is Small ribosomal subunit protein uS13 (Rhizobium meliloti (strain 1021) (Ensifer meliloti)).